A 96-amino-acid chain; its full sequence is Alpha-elapitoxin-Al2b (96 aa).

The N-terminal stretch at M1–G21 is a signal peptide. 5 cysteine pairs are disulfide-bonded: C24–C41, C34–C62, C47–C51, C66–C77, and C78–C83.

It belongs to the three-finger toxin family. Long-chain subfamily. Type II alpha-neurotoxin sub-subfamily. In terms of tissue distribution, expressed by the venom gland.

The protein localises to the secreted. Functionally, potent long-chain postsynaptic neurotoxin. Pseudo-irreversibly inhibits the nicotinic acetylcholine receptor through competitive antagonism. The protein is Alpha-elapitoxin-Al2b of Austrelaps labialis (Pygmy copperhead).